Here is an 80-residue protein sequence, read N- to C-terminus: Serine rich endogenous peptide 15 (80 aa).

The signal sequence occupies residues 1–28; it reads MSKEKSYVIALLLSLLLCLSFQVGVSEA. 2 consecutive short sequence motifs (SCOOP motif) follow at residues 32–46 and 66–80; these read AVTT…CANG and PRVA…GKGP. The segment at 37–80 is disordered; that stretch reads YSDSPRCANGSSASPPTRHCPRGRPRPPTPRVAVHSNSTKGKGP. 2 consecutive short sequence motifs (sxS motif essential for MIK2 binding) follow at residues 38-40 and 72-74; these read SDS and SNS. Polar residues predominate over residues 71-80; sequence HSNSTKGKGP.

It belongs to the serine rich endogenous peptide (SCOOP) phytocytokine family. As to quaternary structure, interacts with MIK2 (via extracellular leucine-rich repeat domain); this interaction triggers the formation of complex between MIK2 and the BAK1/SERK3 and SERK4 coreceptors, and subsequent BAK1 activation by phosphorylation. In terms of tissue distribution, mostly expressed in leaves, and, to a lower extent, in seedlings shoots, roots, stems, siliques, seeds and flowers.

Its subcellular location is the cell membrane. It localises to the secreted. The protein resides in the extracellular space. It is found in the apoplast. The protein localises to the endoplasmic reticulum. Its subcellular location is the golgi apparatus. Functionally, brassicaceae-specific phytocytokine (plant endogenous peptide released into the apoplast) perceived by MIK2 in a BAK1/SERK3 and SERK4 coreceptors-dependent manner, that modulates various physiological and antimicrobial processes including growth prevention and reactive oxygen species (ROS) response regulation. Inhibits root growth. The chain is Serine rich endogenous peptide 15 from Arabidopsis thaliana (Mouse-ear cress).